The primary structure comprises 219 residues: Elongation factor Ts, chloroplastic (219 aa).

Belongs to the EF-Ts family.

It localises to the plastid. The protein localises to the chloroplast. Its function is as follows. Associates with the EF-Tu.GDP complex and induces the exchange of GDP to GTP. It remains bound to the aminoacyl-tRNA.EF-Tu.GTP complex up to the GTP hydrolysis stage on the ribosome. This chain is Elongation factor Ts, chloroplastic (tsf), found in Guillardia theta (Cryptophyte).